A 263-amino-acid polypeptide reads, in one-letter code: Proliferating cell nuclear antigen (263 aa).

A DNA-binding region spans residues 61–80 (RCDRNLSMGMNLNNMAKMLR).

This sequence belongs to the PCNA family. Homotrimer. Interacts with FEN1A. Interacts with POLL. Interacts with RAD/GEN1. Interacts with DJA7 and DJA8. Expressed in proliferating tissues. Expressed in roots and root apex. Expressed at low levels in young leaves. Not detected in mature leaves. Highly expressed in shoot apical meristem (SAM). Expressed in flag leaves and panicles.

The protein resides in the nucleus. Functionally, this protein is an auxiliary protein of DNA polymerase delta and is involved in the control of eukaryotic DNA replication by increasing the polymerase's processibility during elongation of the leading strand. This Oryza sativa subsp. japonica (Rice) protein is Proliferating cell nuclear antigen.